A 288-amino-acid polypeptide reads, in one-letter code: tRNA (guanine-N(1)-)-methyltransferase (288 aa).

The disordered stretch occupies residues 82–105; the sequence is ATDAVDTSDPGDSAAPDSSAPSGA. The segment covering 89–105 has biased composition (low complexity); the sequence is SDPGDSAAPDSSAPSGA. S-adenosyl-L-methionine-binding positions include Gly-137 and 162-167; that span reads IGDYVL.

Belongs to the RNA methyltransferase TrmD family. As to quaternary structure, homodimer.

Its subcellular location is the cytoplasm. The enzyme catalyses guanosine(37) in tRNA + S-adenosyl-L-methionine = N(1)-methylguanosine(37) in tRNA + S-adenosyl-L-homocysteine + H(+). Specifically methylates guanosine-37 in various tRNAs. The polypeptide is tRNA (guanine-N(1)-)-methyltransferase (Bifidobacterium longum (strain DJO10A)).